Consider the following 156-residue polypeptide: Ribosomal RNA large subunit methyltransferase H (156 aa).

Residues L73, G104, and 123 to 128 (LSPLTL) each bind S-adenosyl-L-methionine.

This sequence belongs to the RNA methyltransferase RlmH family. As to quaternary structure, homodimer.

Its subcellular location is the cytoplasm. It catalyses the reaction pseudouridine(1915) in 23S rRNA + S-adenosyl-L-methionine = N(3)-methylpseudouridine(1915) in 23S rRNA + S-adenosyl-L-homocysteine + H(+). Specifically methylates the pseudouridine at position 1915 (m3Psi1915) in 23S rRNA. This chain is Ribosomal RNA large subunit methyltransferase H, found in Pectobacterium atrosepticum (strain SCRI 1043 / ATCC BAA-672) (Erwinia carotovora subsp. atroseptica).